Here is a 433-residue protein sequence, read N- to C-terminus: Isocitrate dehydrogenase [NADP], chloroplastic (433 aa).

Residues 1 to 21 constitute a chloroplast transit peptide; that stretch reads QFSPNLSFSAFFPIITFTTAT. NADP(+)-binding positions include 98 to 100 and R105; that span reads TIT. A substrate-binding site is contributed by T100. Substrate-binding positions include 117–123, R132, and R155; that span reads SPNGTIR. A Mn(2+)-binding site is contributed by D275. An NADP(+)-binding site is contributed by K283. D298 is a Mn(2+) binding site. NADP(+)-binding positions include 333 to 338 and N351; that span reads GTVTRH.

This sequence belongs to the isocitrate and isopropylmalate dehydrogenases family. Mg(2+) is required as a cofactor. Requires Mn(2+) as cofactor. As to expression, detected in all tissues examined.

The protein localises to the plastid. It localises to the chloroplast. It catalyses the reaction D-threo-isocitrate + NADP(+) = 2-oxoglutarate + CO2 + NADPH. The sequence is that of Isocitrate dehydrogenase [NADP], chloroplastic from Medicago sativa (Alfalfa).